Reading from the N-terminus, the 367-residue chain is Damage-control phosphatase At2g17340 (367 aa).

M1 carries the N-acetylmethionine modification. Residues D220, N221, and D256 each coordinate Mn(2+). The short motif at 318–322 is the Subfamily II EGMGR motif element; that stretch reads EGMGR.

The protein belongs to the damage-control phosphatase family. Phosphopantetheine phosphatase II subfamily. Multimer. Requires Mn(2+) as cofactor. The cofactor is Ni(2+).

Activity is strongly promoted by Co(2+), Ni(2+), Mg(2+), Cu(2+) and Mn(2+). Activity is inhibited by EDTA. In terms of biological role, metal-dependent phosphatase with probable damage-control functions. Shows phosphatase activity against several substrates, including sugar phosphates and p-nitrophenyl phosphate(pNPP). Prefers sugar phosphate substrates, including the extremely potent glycating agents ribose-5-phosphate and erythrose-4-phosphate. In Arabidopsis thaliana (Mouse-ear cress), this protein is Damage-control phosphatase At2g17340.